The chain runs to 363 residues: Ribosomal RNA small subunit methyltransferase H (363 aa).

Residues 55 to 57 (GGH), Asp75, Asp122, and Gln129 each bind S-adenosyl-L-methionine.

Belongs to the methyltransferase superfamily. RsmH family.

The protein localises to the cytoplasm. It catalyses the reaction cytidine(1402) in 16S rRNA + S-adenosyl-L-methionine = N(4)-methylcytidine(1402) in 16S rRNA + S-adenosyl-L-homocysteine + H(+). Functionally, specifically methylates the N4 position of cytidine in position 1402 (C1402) of 16S rRNA. The protein is Ribosomal RNA small subunit methyltransferase H of Bordetella petrii (strain ATCC BAA-461 / DSM 12804 / CCUG 43448).